Here is a 2297-residue protein sequence, read N- to C-terminus: Xin actin-binding repeat-containing protein 1 (2297 aa).

Basic and acidic residues predominate over residues 1–11 (MAEVAKQKKAT). The disordered stretch occupies residues 1 to 28 (MAEVAKQKKATEAVCGDEDFPPPPPPLP). Xin repeat units follow at residues 104-119 (GEVQ…WTLD), 139-154 (GDVK…STFD), 169-184 (GDVR…QPLD), 208-223 (GDVT…KPLD), 248-263 (GDVK…DPCC), 286-301 (SDFK…QPLD), 323-338 (GGVD…QPLD), 362-377 (ADVH…QPLS), and 396-411 (GNVG…QPMD). Positions 433–442 (GEVQDKRMQF) are enriched in basic and acidic residues. The disordered stretch occupies residues 433-461 (GEVQDKRMQFEKSTAGKTAGDSGNKVQND). Xin repeat units lie at residues 464 to 479 (GDVK…LPLN), 494 to 509 (GDVK…TPLY), 532 to 547 (GNVQ…RPLD), 570 to 585 (DDTR…QPLD), 605 to 620 (SNVK…KPMD), 638 to 653 (ADVK…QPLD), 677 to 692 (VNVK…EPLD), 715 to 730 (GDVS…KSLG), 747 to 762 (GSVH…QPIG), 779 to 794 (GDVG…LSLD), 818 to 833 (VNVK…QPLY), 856 to 871 (GDVR…KPLD), 893 to 908 (GDVK…QPLD), and 928 to 943 (KCVQ…EQAS). S952 carries the phosphoserine modification. Xin repeat units follow at residues 959 to 974 (GDVR…QPID), 997 to 1012 (GDVK…QSLD), and 1033 to 1048 (ADVK…TPLD). 4 disordered regions span residues 1617 to 1680 (PSSH…KDQK), 1866 to 1900 (KENI…VPSI), 2147 to 2191 (SAAR…PRRK), and 2243 to 2297 (ELSS…TEKH). 2 stretches are compositionally biased toward low complexity: residues 1618–1630 (SSHT…VSVT) and 1644–1656 (SVSS…KNSS). Basic and acidic residues-rich tracts occupy residues 1876 to 1885 (SNKDELHFTS) and 2151 to 2162 (KPAESPTDKPKT). The span at 2166 to 2180 (QSNAGSSSSQNSSAS) shows a compositional bias: low complexity. Over residues 2259 to 2278 (GMTSPVLQRSGQSFSSNSLS) the composition is skewed to polar residues.

It belongs to the Xin family. In terms of tissue distribution, expressed at intercalated disks in the heart (at protein level).

Its subcellular location is the cell junction. The protein localises to the adherens junction. It is found in the desmosome. Positively regulates organization of the outer plexiform layer and Muller glia cells in the retina. May protect actin filaments from depolymerization. May play a role in development of normal skeletal muscle morphology and muscle fiber type composition. This is Xin actin-binding repeat-containing protein 1 from Danio rerio (Zebrafish).